The following is a 242-amino-acid chain: Probable transcriptional regulatory protein XCV3282 (242 aa).

Belongs to the TACO1 family.

The protein resides in the cytoplasm. This chain is Probable transcriptional regulatory protein XCV3282, found in Xanthomonas euvesicatoria pv. vesicatoria (strain 85-10) (Xanthomonas campestris pv. vesicatoria).